The primary structure comprises 68 residues: Serine palmitoyltransferase small subunit A (68 aa).

The Cytoplasmic portion of the chain corresponds to 1-9 (MALARAWKQ). A helical transmembrane segment spans residues 10-26 (MSWFYYQYLLVTALYML). The Lumenal portion of the chain corresponds to 27–31 (EPWER). A helical membrane pass occupies residues 32–54 (TVFNSMLVSIVGMALYTGYVFMP). The Cytoplasmic segment spans residues 55-68 (QHIMAILHYFEIVQ).

This sequence belongs to the SPTSS family. SPTSSA subfamily. Component of the serine palmitoyltransferase (SPT) complex, which is composed of SPTLC1, SPTLC2 or SPTLC3 and SPTSSA or SPTSSB. The heterodimer consisting of SPTLC1 and SPTLC2/SPTLC3 forms the catalytic core of the enzyme, while SPTSSA or SPTSSB subunits determine substrate specificity. SPT also interacts with ORMDL proteins, especially ORMDL3, which negatively regulate SPT activity in the presence of ceramides. Interacts with MBOAT7; the interaction plays a role in MBOAT7 localization to mitochondria-associated membranes.

The protein resides in the endoplasmic reticulum membrane. It participates in lipid metabolism; sphingolipid metabolism. In terms of biological role, component of the serine palmitoyltransferase multisubunit enzyme (SPT) that catalyzes the initial and rate-limiting step in sphingolipid biosynthesis by condensing L-serine and activated acyl-CoA (most commonly palmitoyl-CoA) to form long-chain bases. The SPT complex is composed of SPTLC1, SPTLC2 or SPTLC3 and SPTSSA or SPTSSB. Within this complex, the heterodimer consisting of SPTLC1 and SPTLC2/SPTLC3 forms the catalytic core. Within the SPT complex, SPTSSA stimulates the catalytic activity and plays a role in substrate specificity, which depends upon the overall complex composition. The SPTLC1-SPTLC2-SPTSSA complex shows a strong preference for C16-CoA substrate, while the SPTLC1-SPTLC3-SPTSSA isozyme uses both C14-CoA and C16-CoA as substrates, with a slight preference for C14-CoA. Independently of its action as a SPT component, may be involved in MBOAT7 localization to mitochondria-associated membranes, a membrane bridge between the endoplasmic reticulum and mitochondria, may hence affect MBOAT7-catalyzed incorporation of arachidonic acid into phosphatidylinositol. This is Serine palmitoyltransferase small subunit A (SPTSSA) from Bos taurus (Bovine).